Consider the following 392-residue polypeptide: Selenide, water dikinase 1 (392 aa).

The active site involves C31. ATP contacts are provided by residues K32, G67 to D69, D87, D110, and G161 to T164. D69 serves as a coordination point for Mg(2+). D110 contacts Mg(2+). D265 provides a ligand contact to Mg(2+).

The protein belongs to the selenophosphate synthase 1 family. Class II subfamily. In terms of assembly, homodimer. The cofactor is Mg(2+).

It localises to the cell membrane. The protein resides in the nucleus membrane. It catalyses the reaction hydrogenselenide + ATP + H2O = selenophosphate + AMP + phosphate + 2 H(+). Synthesizes selenophosphate from selenide and ATP. This is Selenide, water dikinase 1 (sephs1) from Xenopus tropicalis (Western clawed frog).